The following is a 176-amino-acid chain: Cytochrome b (176 aa).

3 helical membrane passes run 33 to 53 (FGSL…FLAM), 77 to 98 (WLLR…YLHI), and 113 to 133 (WNVG…GYVL). The heme b site is built by His83 and His97.

Belongs to the cytochrome b family. The cytochrome bc1 complex contains 11 subunits: 3 respiratory subunits (MT-CYB, CYC1 and UQCRFS1), 2 core proteins (UQCRC1 and UQCRC2) and 6 low-molecular weight proteins (UQCRH/QCR6, UQCRB/QCR7, UQCRQ/QCR8, UQCR10/QCR9, UQCR11/QCR10 and a cleavage product of UQCRFS1). This cytochrome bc1 complex then forms a dimer. It depends on heme b as a cofactor.

The protein localises to the mitochondrion inner membrane. Functionally, component of the ubiquinol-cytochrome c reductase complex (complex III or cytochrome b-c1 complex) that is part of the mitochondrial respiratory chain. The b-c1 complex mediates electron transfer from ubiquinol to cytochrome c. Contributes to the generation of a proton gradient across the mitochondrial membrane that is then used for ATP synthesis. This Promops centralis (Big crested mastiff bat) protein is Cytochrome b (MT-CYB).